The sequence spans 369 residues: mRNA cap guanine-N(7) methyltransferase 1 (369 aa).

The disordered stretch occupies residues Met-1–Leu-55. A compositionally biased stretch (gly residues) spans Gly-22–Gly-32. The segment covering Tyr-33–Ser-48 has biased composition (basic and acidic residues). Residues Ser-61 to Arg-340 form the mRNA cap 0 methyltransferase domain. Asn-70–Asn-71 lines the mRNA pocket. Residues Lys-74, Ala-92, Asp-114, Asp-149 to Cys-150, and Gln-171 to Ala-173 each bind S-adenosyl-L-methionine.

This sequence belongs to the class I-like SAM-binding methyltransferase superfamily. mRNA cap 0 methyltransferase family.

Its subcellular location is the nucleus. The enzyme catalyses a 5'-end (5'-triphosphoguanosine)-ribonucleoside in mRNA + S-adenosyl-L-methionine = a 5'-end (N(7)-methyl 5'-triphosphoguanosine)-ribonucleoside in mRNA + S-adenosyl-L-homocysteine. Functionally, mRNA-capping methyltransferase that methylates the N7 position of the added guanosine to the 5'-cap structure of mRNAs. Binds RNA containing 5'-terminal GpppC. This Oryza sativa subsp. japonica (Rice) protein is mRNA cap guanine-N(7) methyltransferase 1.